Reading from the N-terminus, the 928-residue chain is Envelope glycoprotein B (928 aa).

Positions 1-12 (MAARGGAERAAG) are enriched in low complexity. 2 disordered regions span residues 1-25 (MAARGGAERAAGAGDGRRGQRRHLR) and 67-105 (GRPATTPPAPPPEEAASPAPPASPSPPGPDGDDAASPDN). The signal sequence occupies residues 1-62 (MAARGGAERA…LWATWALLLA (62 aa)). The Virion surface portion of the chain corresponds to 63 to 803 (APAAGRPATT…SGIASFIANP (741 aa)). Residues 71 to 95 (TTPPAPPPEEAASPAPPASPSPPGP) show a composition bias toward pro residues. Asparagine 105 and asparagine 153 each carry an N-linked (GlcNAc...) asparagine; by host glycan. 5 disulfide bridges follow: cysteine 128–cysteine 606, cysteine 145–cysteine 562, cysteine 219–cysteine 283, cysteine 376–cysteine 424, and cysteine 627–cysteine 662. 2 involved in fusion and/or binding to host membrane regions span residues 185–191 (TWAGSTY) and 270–277 (GSAGLYRT). N-linked (GlcNAc...) asparagine; by host glycosylation is found at asparagine 442 and asparagine 484. Residues 495–525 (APKPGPRRARRPRRLRPAPGRGQRARRRRHA) form a disordered region. Residues 499 to 510 (GPRRARRPRRLR) show a composition bias toward basic residues. Residues asparagine 637 and asparagine 703 are each glycosylated (N-linked (GlcNAc...) asparagine; by host). Hydrophobic membrane proximal region regions lie at residues 748-801 (IDRV…SFIA) and 781-801 (VVLGAAGAALSTVSGIASFIA). A helical membrane pass occupies residues 804–824 (FGALATGLLVLAGLVAAFLAY). The Intravirion segment spans residues 825–928 (RYISRLRSNP…QLPMADVGGA (104 aa)). The Golgi targeting motif lies at 876-879 (YMSL). Residues 917 to 920 (YQQL) carry the Internalization motif motif.

The protein belongs to the herpesviridae glycoprotein B family. As to quaternary structure, homotrimer; disulfide-linked. Binds to heparan sulfate proteoglycans. Interacts with gH/gL heterodimer. A proteolytic cleavage by host furin generates two subunits that remain linked by disulfide bonds.

The protein localises to the virion membrane. It is found in the host cell membrane. Its subcellular location is the host endosome membrane. The protein resides in the host Golgi apparatus membrane. Envelope glycoprotein that forms spikes at the surface of virion envelope. Essential for the initial attachment to heparan sulfate moieties of the host cell surface proteoglycans. Involved in fusion of viral and cellular membranes leading to virus entry into the host cell. Following initial binding to its host receptors, membrane fusion is mediated by the fusion machinery composed at least of gB and the heterodimer gH/gL. May be involved in the fusion between the virion envelope and the outer nuclear membrane during virion egress. The sequence is that of Envelope glycoprotein B from Bovine herpesvirus 1.1 (strain P8-2) (BoHV-1).